Reading from the N-terminus, the 435-residue chain is MLDLKLLRDRPEQVRQALQNRRATVDLDGILQLDRERRQLETRKGSLQAESNSLGKKVGEIIRQGADPQGPEVAALRQRGVDLKAEIAQLEQQERELEEEIRARLLTLPNLPLPSVPVGRDEADNVEVRRWGEELKPAHPVLPHDEIAEKLGLLEIGRAVKVAQSRFVAMVGAGAALERALIAMMLERHIAAGYTEVIPPFLVNSAALQGTGQLPKFAEDSFRCADDDLWLIPTAEVPLTNLYRDEMIPAESLPLYFCAYTPCFRREAGSYGRDTKGLIRLHQFQKVELVKVTRPDQSEAEHEKLVQDAEAILQMLELPYRVVELCSGDLGFAAARCFDLEVWFPSQNQYREISSCSNCWDFQARRANLRYKEAGQKGTQFVHTLNGSGLAVGRSLAALLENHQQPDGSIRIPKALRPFLSSRFLSEDGILIPAA.

234–236 (TAE) contacts L-serine. An ATP-binding site is contributed by 265–267 (RRE). An L-serine-binding site is contributed by glutamate 288. Position 352-355 (352-355 (EISS)) interacts with ATP. Serine 388 is a binding site for L-serine.

Belongs to the class-II aminoacyl-tRNA synthetase family. Type-1 seryl-tRNA synthetase subfamily. As to quaternary structure, homodimer. The tRNA molecule binds across the dimer.

It localises to the cytoplasm. It catalyses the reaction tRNA(Ser) + L-serine + ATP = L-seryl-tRNA(Ser) + AMP + diphosphate + H(+). It carries out the reaction tRNA(Sec) + L-serine + ATP = L-seryl-tRNA(Sec) + AMP + diphosphate + H(+). It participates in aminoacyl-tRNA biosynthesis; selenocysteinyl-tRNA(Sec) biosynthesis; L-seryl-tRNA(Sec) from L-serine and tRNA(Sec): step 1/1. Functionally, catalyzes the attachment of serine to tRNA(Ser). Is also able to aminoacylate tRNA(Sec) with serine, to form the misacylated tRNA L-seryl-tRNA(Sec), which will be further converted into selenocysteinyl-tRNA(Sec). The protein is Serine--tRNA ligase of Synechococcus sp. (strain JA-2-3B'a(2-13)) (Cyanobacteria bacterium Yellowstone B-Prime).